Here is a 166-residue protein sequence, read N- to C-terminus: Phospholipase A2 myotoxin inhibitor protein (166 aa).

A signal peptide spans 1-19 (MRLILLSGLLLLGTFLANG). The region spanning 46–161 (LKYAFLTVHK…CDDNLLVVCE (116 aa)) is the C-type lectin domain. 2 cysteine pairs are disulfide-bonded: cysteine 83/cysteine 160 and cysteine 138/cysteine 152. Residue asparagine 122 is glycosylated (N-linked (GlcNAc...) asparagine).

Belongs to the alpha-type phospholipase A2 inhibitor family. In terms of assembly, oligomer. Homotrimer; non-covalently linked. Post-translationally, glycosylated. The glycosylation has no role in the association of this PLI and PA2 enzyme. As to expression, expressed by the liver.

It localises to the secreted. Its function is as follows. This phospholipase A2 inhibitor binds directly phospholipase A2 in the presence or absence of calcium. Has anti-enzymatic, anti-myotoxic, anti-edema inducing, anti-cytotoxic, anti-bactericidal, and anti-lethal properties against basic and acidic phospholipases A2 from Bothrops venoms. In Bothrops moojeni (Lance-headed viper), this protein is Phospholipase A2 myotoxin inhibitor protein.